The chain runs to 196 residues: SAGA-associated factor 11 homolog (196 aa).

The tract at residues 1-22 (MSAANMPTTTGAQGSGNQVPTT) is disordered. The SGF11-type zinc finger occupies 106–127 (CTCPNCDRLVAAARFAPHLEKC). The interval 144-196 (TKEGATSAHLHSAGNTGGTDDEDDVDWSSDKRRKKSNQNSRNNGSKKNNGKSF) is disordered. A Phosphoserine modification is found at serine 172. Residues 180 to 196 (NQNSRNNGSKKNNGKSF) show a composition bias toward low complexity.

Belongs to the SGF11 family. Component of some SAGA transcription coactivator-HAT complexes, at least composed of Ada2b, not/nonstop, Pcaf/Gcn5, Sgf11 and Spt3. Within the SAGA complex, Sgf11, e(y)2, and not/nonstop form an additional subcomplex of SAGA called the DUB module (deubiquitination module). Interacts directly with not/nonstop. Interacts with the AMEX complex component xmas-2. Interacts with Cbp80; important for promoter recruitment of Sgf11 that is not associated with the DUB module.

The protein localises to the nucleus. It localises to the nucleoplasm. Its subcellular location is the cytoplasm. Its function is as follows. Component of the transcription regulatory histone acetylation (HAT) complex SAGA, a multiprotein complex that activates transcription by remodeling chromatin and mediating histone acetylation and deubiquitination. Within the SAGA complex, participates in a subcomplex that specifically deubiquitinates histone H2B. The SAGA complex is recruited to specific gene promoters by activators, where it is required for transcription. Required for nuclear receptor-mediated transactivation. Binds independently on SAGA to promoters in an RNA-dependent manner. Binds to mRNA and is essential for total mRNA export from the nucleus. Required to counteract heterochromatin silencing. Controls the development of neuronal connectivity in visual system by being required for accurate axon targeting in the optic lobe. Required for expression of ecdysone-induced genes such as br/broad. The polypeptide is SAGA-associated factor 11 homolog (Drosophila erecta (Fruit fly)).